We begin with the raw amino-acid sequence, 168 residues long: G/U mismatch-specific DNA glycosylase (168 aa).

It belongs to the uracil-DNA glycosylase (UDG) superfamily. TDG/mug family. In terms of assembly, binds DNA as a monomer.

Its subcellular location is the cytoplasm. It carries out the reaction Specifically hydrolyzes mismatched double-stranded DNA and polynucleotides, releasing free uracil.. Functionally, excises ethenocytosine and uracil, which can arise by alkylation or deamination of cytosine, respectively, from the corresponding mispairs with guanine in ds-DNA. It is capable of hydrolyzing the carbon-nitrogen bond between the sugar-phosphate backbone of the DNA and the mispaired base. The complementary strand guanine functions in substrate recognition. Required for DNA damage lesion repair in stationary-phase cells. In Escherichia fergusonii (strain ATCC 35469 / DSM 13698 / CCUG 18766 / IAM 14443 / JCM 21226 / LMG 7866 / NBRC 102419 / NCTC 12128 / CDC 0568-73), this protein is G/U mismatch-specific DNA glycosylase.